A 469-amino-acid chain; its full sequence is Protein C-ets-2 (469 aa).

Positions 85–170 (ATFSGFKKEQ…EHLEQMIKEN (86 aa)) constitute a PNT domain. 2 positions are modified to phosphoserine: serine 220 and serine 225. The tract at residues 264 to 289 (NLLTNNSGTPKDHDSPENGADSFESS) is disordered. Residues serine 295, serine 298, and serine 301 each carry the phosphoserine modification. The segment at residues 363–443 (IQLWQFLLEL…SGKRYVYRFV (81 aa)) is a DNA-binding region (ETS).

It belongs to the ETS family. In terms of processing, phosphorylation by CDK10 at Ser-220 and Ser-225 creates a phosphodegron that targets ETS2 for proteasomal degradation.

Its subcellular location is the nucleus. Transcription factor activating transcription. Binds specifically the DNA GGAA/T core motif (Ets-binding site or EBS) in gene promoters and stimulates transcription. The polypeptide is Protein C-ets-2 (ETS2) (Homo sapiens (Human)).